The primary structure comprises 65 residues: Oxiana weak toxin (65 aa).

5 disulfide bridges follow: cysteine 3/cysteine 24, cysteine 6/cysteine 11, cysteine 17/cysteine 42, cysteine 46/cysteine 57, and cysteine 58/cysteine 63.

Belongs to the three-finger toxin family. Ancestral subfamily. Orphan group II sub-subfamily. In terms of tissue distribution, expressed by the venom gland.

It is found in the secreted. Binds to muscle and neuronal nicotinic acetylcholine receptors (nAChR). It binds to extracellular domain of rat alpha-7/CHRNA7 nAChR (IC(50)=2.2 uM) and to Torpedo californica membranes (IC(50)=30 uM). The protein is Oxiana weak toxin of Naja oxiana (Central Asian cobra).